Consider the following 95-residue polypeptide: MTKSELIEKLATRQSQLSAKEVESAIKEMLEQMATTLEGGDRIEIRGFGSFSLHYRAPRTGRNPKTGTSVELDGKYVPHFKPGKELRERVDAVNV.

The segment at 56 to 76 is disordered; that stretch reads RAPRTGRNPKTGTSVELDGKY.

Belongs to the bacterial histone-like protein family. As to quaternary structure, heterodimer of an alpha and a beta chain.

In terms of biological role, this protein is one of the two subunits of integration host factor, a specific DNA-binding protein that functions in genetic recombination as well as in transcriptional and translational control. The sequence is that of Integration host factor subunit beta from Shewanella denitrificans (strain OS217 / ATCC BAA-1090 / DSM 15013).